The chain runs to 90 residues: High mobility group nucleosome-binding domain-containing protein 4 (90 aa).

Residues 1–90 form a disordered region; it reads MPKRKAKGDA…QKAEGTGDAK (90 aa). A compositionally biased stretch (basic and acidic residues) spans 7–23; that stretch reads KGDAKGDKGKVKDEPQR. At serine 29 the chain carries ADP-ribosylserine. Residues 37–64 show a composition bias toward basic and acidic residues; that stretch reads PEPRPKKAPAKKGEKLAKGRKGKAEVSK. Residues 65 to 83 show a composition bias toward polar residues; that stretch reads DGNNPAKNRDASTVQSQKA. Residue serine 80 is modified to Phosphoserine. An N6-acetyllysine modification is found at lysine 82.

The protein belongs to the HMGN family.

It is found in the nucleus. In Bos taurus (Bovine), this protein is High mobility group nucleosome-binding domain-containing protein 4 (HMGN4).